We begin with the raw amino-acid sequence, 130 residues long: Small ribosomal subunit protein uS9 (130 aa).

This sequence belongs to the universal ribosomal protein uS9 family.

The polypeptide is Small ribosomal subunit protein uS9 (Albidiferax ferrireducens (strain ATCC BAA-621 / DSM 15236 / T118) (Rhodoferax ferrireducens)).